The chain runs to 198 residues: Probable minor pilin MMP0709 (198 aa).

Positions 1-5 (MSNRG) are excised as a propeptide. A QXSXEXXXL motif is present at residues 6 to 14 (QLSIEMVIL).

The N-terminus is probably cleaved by the prepilin peptidase EppA, which recognizes the class III signal sequence.

It is found in the secreted. Its subcellular location is the cell surface. The protein localises to the fimbrium. In Methanococcus maripaludis (strain DSM 14266 / JCM 13030 / NBRC 101832 / S2 / LL), this protein is Probable minor pilin MMP0709.